A 432-amino-acid polypeptide reads, in one-letter code: 3-phosphoshikimate 1-carboxyvinyltransferase (432 aa).

3 residues coordinate 3-phosphoshikimate: lysine 23, serine 24, and arginine 28. Lysine 23 provides a ligand contact to phosphoenolpyruvate. The phosphoenolpyruvate site is built by glycine 96 and arginine 125. Serine 170, glutamine 172, aspartate 318, and lysine 345 together coordinate 3-phosphoshikimate. Glutamine 172 serves as a coordination point for phosphoenolpyruvate. Aspartate 318 (proton acceptor) is an active-site residue. 2 residues coordinate phosphoenolpyruvate: arginine 349 and arginine 391.

It belongs to the EPSP synthase family. In terms of assembly, monomer.

The protein localises to the cytoplasm. It catalyses the reaction 3-phosphoshikimate + phosphoenolpyruvate = 5-O-(1-carboxyvinyl)-3-phosphoshikimate + phosphate. It participates in metabolic intermediate biosynthesis; chorismate biosynthesis; chorismate from D-erythrose 4-phosphate and phosphoenolpyruvate: step 6/7. Functionally, catalyzes the transfer of the enolpyruvyl moiety of phosphoenolpyruvate (PEP) to the 5-hydroxyl of shikimate-3-phosphate (S3P) to produce enolpyruvyl shikimate-3-phosphate and inorganic phosphate. In Gloeobacter violaceus (strain ATCC 29082 / PCC 7421), this protein is 3-phosphoshikimate 1-carboxyvinyltransferase.